Reading from the N-terminus, the 480-residue chain is Siroheme synthase 2 (480 aa).

Residues 1-202 (MDYLPMFARL…QDWQSAETWL (202 aa)) are precorrin-2 dehydrogenase /sirohydrochlorin ferrochelatase. NAD(+) contacts are provided by residues 22 to 23 (EV) and 43 to 44 (PE). S126 bears the Phosphoserine mark. The segment at 214–480 (GEVVLVGAGP…GCDLKLVNLA (267 aa)) is uroporphyrinogen-III C-methyltransferase. P223 lines the S-adenosyl-L-methionine pocket. The active-site Proton acceptor is D246. Residue K268 is the Proton donor of the active site. S-adenosyl-L-methionine-binding positions include 299–301 (GGD), 329–330 (TA), M381, and G410.

It in the N-terminal section; belongs to the precorrin-2 dehydrogenase / sirohydrochlorin ferrochelatase family. In the C-terminal section; belongs to the precorrin methyltransferase family.

The enzyme catalyses uroporphyrinogen III + 2 S-adenosyl-L-methionine = precorrin-2 + 2 S-adenosyl-L-homocysteine + H(+). The catalysed reaction is precorrin-2 + NAD(+) = sirohydrochlorin + NADH + 2 H(+). It catalyses the reaction siroheme + 2 H(+) = sirohydrochlorin + Fe(2+). Its pathway is cofactor biosynthesis; adenosylcobalamin biosynthesis; precorrin-2 from uroporphyrinogen III: step 1/1. The protein operates within cofactor biosynthesis; adenosylcobalamin biosynthesis; sirohydrochlorin from precorrin-2: step 1/1. It functions in the pathway porphyrin-containing compound metabolism; siroheme biosynthesis; precorrin-2 from uroporphyrinogen III: step 1/1. It participates in porphyrin-containing compound metabolism; siroheme biosynthesis; siroheme from sirohydrochlorin: step 1/1. Its pathway is porphyrin-containing compound metabolism; siroheme biosynthesis; sirohydrochlorin from precorrin-2: step 1/1. Multifunctional enzyme that catalyzes the SAM-dependent methylations of uroporphyrinogen III at position C-2 and C-7 to form precorrin-2 via precorrin-1. Then it catalyzes the NAD-dependent ring dehydrogenation of precorrin-2 to yield sirohydrochlorin. Finally, it catalyzes the ferrochelation of sirohydrochlorin to yield siroheme. The protein is Siroheme synthase 2 of Aeromonas salmonicida (strain A449).